We begin with the raw amino-acid sequence, 237 residues long: Small ribosomal subunit protein eS4 (237 aa).

The region spanning 38 to 110 is the S4 RNA-binding domain; that stretch reads LPLAVVVRDV…EAKYYDLKPI (73 aa).

This sequence belongs to the eukaryotic ribosomal protein eS4 family.

This Pyrobaculum calidifontis (strain DSM 21063 / JCM 11548 / VA1) protein is Small ribosomal subunit protein eS4.